Here is a 149-residue protein sequence, read N- to C-terminus: Large ribosomal subunit protein bL9 (149 aa).

Belongs to the bacterial ribosomal protein bL9 family.

Binds to the 23S rRNA. The sequence is that of Large ribosomal subunit protein bL9 from Shewanella amazonensis (strain ATCC BAA-1098 / SB2B).